Here is a 187-residue protein sequence, read N- to C-terminus: Elongation factor P (187 aa).

The protein belongs to the elongation factor P family.

It is found in the cytoplasm. It functions in the pathway protein biosynthesis; polypeptide chain elongation. Functionally, involved in peptide bond synthesis. Stimulates efficient translation and peptide-bond synthesis on native or reconstituted 70S ribosomes in vitro. Probably functions indirectly by altering the affinity of the ribosome for aminoacyl-tRNA, thus increasing their reactivity as acceptors for peptidyl transferase. The polypeptide is Elongation factor P (Ruegeria pomeroyi (strain ATCC 700808 / DSM 15171 / DSS-3) (Silicibacter pomeroyi)).